Here is a 185-residue protein sequence, read N- to C-terminus: Calcium-binding protein K-like (185 aa).

EF-hand domains are found at residues 60-95 (WDEASMVRMFKLFDSDGNGVIDVKEFITALYMMTRA) and 96-131 (PTTDKLGFLFDLFDSDKSGYLEAGEIEKLVNIVVVC). Ca(2+) contacts are provided by aspartate 73, aspartate 75, asparagine 77, glutamate 84, aspartate 109, aspartate 111, serine 113, tyrosine 115, and glutamate 120.

This sequence belongs to the recoverin family.

The polypeptide is Calcium-binding protein K-like (Dictyostelium discoideum (Social amoeba)).